We begin with the raw amino-acid sequence, 399 residues long: Elongation factor Tu (399 aa).

The region spanning 10 to 209 (KPHVNIGTIG…AVDDYIPTPV (200 aa)) is the tr-type G domain. Residues 19-26 (GHVDHGKT) are G1. 19 to 26 (GHVDHGKT) is a binding site for GTP. Mg(2+) is bound at residue Thr26. Residues 62-66 (GITIN) form a G2 region. Residues 83-86 (DCPG) are G3. GTP contacts are provided by residues 83-87 (DCPGH) and 138-141 (NKCD). The interval 138 to 141 (NKCD) is G4. The tract at residues 175 to 177 (SAY) is G5.

The protein belongs to the TRAFAC class translation factor GTPase superfamily. Classic translation factor GTPase family. EF-Tu/EF-1A subfamily. In terms of assembly, monomer.

It is found in the cytoplasm. It carries out the reaction GTP + H2O = GDP + phosphate + H(+). Its function is as follows. GTP hydrolase that promotes the GTP-dependent binding of aminoacyl-tRNA to the A-site of ribosomes during protein biosynthesis. This Bifidobacterium longum subsp. infantis (strain ATCC 15697 / DSM 20088 / JCM 1222 / NCTC 11817 / S12) protein is Elongation factor Tu.